A 166-amino-acid chain; its full sequence is Biotin carboxyl carrier protein of acetyl-CoA carboxylase (166 aa).

The segment covering 61–70 has biased composition (polar residues); sequence STASEASSPA. Residues 61-82 are disordered; it reads STASEASSPASVKDVPVEEQPQ. The 77-residue stretch at 90-166 folds into the Biotinyl-binding domain; the sequence is GDIVESPLVG…EFGQGLVRIK (77 aa). Position 132 is an N6-biotinyllysine (lysine 132).

In terms of assembly, homodimer.

It functions in the pathway lipid metabolism; fatty acid biosynthesis. In terms of biological role, this protein is a component of the acetyl coenzyme A carboxylase complex; first, biotin carboxylase catalyzes the carboxylation of the carrier protein and then the transcarboxylase transfers the carboxyl group to form malonyl-CoA. The chain is Biotin carboxyl carrier protein of acetyl-CoA carboxylase from Streptococcus pyogenes serotype M6 (strain ATCC BAA-946 / MGAS10394).